We begin with the raw amino-acid sequence, 209 residues long: uncharacterized protein (209 aa).

The FCP1 homology domain maps to 1–199 (MQVFLDLDET…DELKRVTASL (199 aa)).

This is an uncharacterized protein from Dryophytes versicolor (chameleon treefrog).